The primary structure comprises 1146 residues: Killer toxin subunits alpha/beta (1146 aa).

The signal sequence occupies residues 1–17; the sequence is MNIFYIFLFLLSFVQGL. Residues 18–29 constitute a propeptide that is removed on maturation; sequence EHTHRRGSLVKR. 2 LysM domains span residues 205–234 and 254–303; these read ADQS…QPIC and KTYK…NLCV. Residues 316–372 enclose the Chitin-binding type-1 domain; it reads IAECGPLAPGEKYNAKCPLNACCSEFGFCGLTKDYCDKKSSTTGAPGTDGCFSNCGY. 4 cysteine pairs are disulfide-bonded: Cys-319-Cys-338, Cys-332-Cys-344, Cys-337-Cys-351, and Cys-366-Cys-370. One can recognise a GH18 domain in the interval 383 to 735; sequence FKKIAYWLDA…DDTEDPFDEE (353 aa). Residues Ile-424 and 447–450 contribute to the chitin site; that span reads GGWD. The active-site Proton donor is the Glu-495. Residues Tyr-496, 562–565, and Trp-707 each bind chitin; that span reads MTYD. N-linked (GlcNAc...) asparagine glycosylation is found at Asn-771, Asn-858, Asn-868, Asn-876, and Asn-1117.

The protein belongs to the glycosyl hydrolase 18 family. The killer toxin is composed of three subunits: alpha, beta and gamma. RF2 is potentially split by membrane-bound basic amino acid-specific peptidase to yield the alpha and beta subunits.

It catalyses the reaction Random endo-hydrolysis of N-acetyl-beta-D-glucosaminide (1-&gt;4)-beta-linkages in chitin and chitodextrins.. Functionally, the alpha subunit is a potent exochitinase. Along with the beta subunit it plays a role in the initial interaction of the toxin with sensitive cells and allow the gamma subunit (the active toxin) to gain entry into the cell. This Kluyveromyces lactis (strain ATCC 8585 / CBS 2359 / DSM 70799 / NBRC 1267 / NRRL Y-1140 / WM37) (Yeast) protein is Killer toxin subunits alpha/beta.